A 379-amino-acid chain; its full sequence is Forkhead box protein E1 (379 aa).

The segment covering 1–11 (MTAESQQSPTR) has biased composition (polar residues). Positions 1–65 (MTAESQQSPT…RRRKRPLQKG (65 aa)) are disordered. Over residues 54-63 (KGRRRKRPLQ) the composition is skewed to basic residues. The segment at residues 66–160 (KPPYSYIALI…DSGSFLRRRK (95 aa)) is a DNA-binding region (fork-head). Positions 239-265 (HSGSEHAQPPNRSISPEVNSTSSSSCN) are disordered. Residues 251-265 (SISPEVNSTSSSSCN) show a composition bias toward low complexity.

In terms of tissue distribution, first expressed at late neural tube and early tailbud stages in the hypophyseal placode. Expression continues in the developing pituitary at late tailbud stages. As development progresses, expressed in the mesoderm of the branchial arches. At stage 38, expressed in the developing thyroid and in the pharyngeal endoderm.

It is found in the nucleus. Transcription factor that binds consensus sites on a variety of gene promoters and activate their transcription. The chain is Forkhead box protein E1 from Xenopus laevis (African clawed frog).